A 145-amino-acid polypeptide reads, in one-letter code: uncharacterized protein (145 aa).

The dksA C4-type zinc-finger motif lies at 86 to 110 (CERCGEEIPEPRLCAIPWTRYCAKC).

This is an uncharacterized protein from Aquifex aeolicus (strain VF5).